A 370-amino-acid polypeptide reads, in one-letter code: Proline-rich protein 5-like (370 aa).

The residue at position 28 (S28) is a Phosphoserine. 2 disordered regions span residues 312 to 346 and 351 to 370; these read LGEE…LDSP and LEDV…ASLS.

Belongs to the PROTOR family. Interacts with the mammalian target of rapamycin complex 2 (mTORC2) which contains MTOR, MLST8, PRR5, RICTOR, MAPKAP1 and DEPTOR. Interacts with RFFL. Interacts (via C-terminus) with ZFP36 (via C-terminus); this interaction may accelerate ZFP36-mediated mRNA decay during stress. Interacts with RICTOR. In terms of processing, ubiquitinated. Ubiquitination by RFFL promotes proteasomal degradation of PRR5L thereby modifying the substrate-specific activity of the mTORC2 complex. Ubiquitination by RFFL is stimulated by LPA/lysophosphatidic acid.

Associates with the mTORC2 complex that regulates cellular processes including survival and organization of the cytoskeleton. Regulates the activity of the mTORC2 complex in a substrate-specific manner preventing for instance the specific phosphorylation of PKCs and thereby controlling cell migration. Plays a role in the stimulation of ZFP36-mediated mRNA decay of several ZFP36-associated mRNAs, such as TNF-alpha and GM-CSF, in response to stress. Required for ZFP36 localization to cytoplasmic stress granule (SG) and P-body (PB) in response to stress. In Mus musculus (Mouse), this protein is Proline-rich protein 5-like (Prr5l).